The chain runs to 377 residues: Chaperone protein DnaJ (377 aa).

Positions 5–69 constitute a J domain; it reads DYYEVLGVSK…NKRANYDQFG (65 aa). A CR-type zinc finger spans residues 134–216; it reads GTEKEISIRK…CHGKGTETKN (83 aa). Zn(2+)-binding residues include Cys147, Cys150, Cys164, Cys167, Cys190, Cys193, Cys204, and Cys207. CXXCXGXG motif repeat units follow at residues 147-154, 164-171, 190-197, and 204-211; these read CETCDGSG, CHYCNGSG, CPVCNGTG, and CPTCHGKG.

The protein belongs to the DnaJ family. Homodimer. The cofactor is Zn(2+).

Its subcellular location is the cytoplasm. In terms of biological role, participates actively in the response to hyperosmotic and heat shock by preventing the aggregation of stress-denatured proteins and by disaggregating proteins, also in an autonomous, DnaK-independent fashion. Unfolded proteins bind initially to DnaJ; upon interaction with the DnaJ-bound protein, DnaK hydrolyzes its bound ATP, resulting in the formation of a stable complex. GrpE releases ADP from DnaK; ATP binding to DnaK triggers the release of the substrate protein, thus completing the reaction cycle. Several rounds of ATP-dependent interactions between DnaJ, DnaK and GrpE are required for fully efficient folding. Also involved, together with DnaK and GrpE, in the DNA replication of plasmids through activation of initiation proteins. The chain is Chaperone protein DnaJ from Staphylococcus carnosus (strain TM300).